We begin with the raw amino-acid sequence, 414 residues long: Serine hydroxymethyltransferase (414 aa).

(6S)-5,6,7,8-tetrahydrofolate is bound by residues leucine 121 and 125–127 (GHL). Position 229 is an N6-(pyridoxal phosphate)lysine (lysine 229).

Belongs to the SHMT family. In terms of assembly, homodimer. The cofactor is pyridoxal 5'-phosphate.

Its subcellular location is the cytoplasm. The catalysed reaction is (6R)-5,10-methylene-5,6,7,8-tetrahydrofolate + glycine + H2O = (6S)-5,6,7,8-tetrahydrofolate + L-serine. It functions in the pathway one-carbon metabolism; tetrahydrofolate interconversion. It participates in amino-acid biosynthesis; glycine biosynthesis; glycine from L-serine: step 1/1. Its function is as follows. Catalyzes the reversible interconversion of serine and glycine with tetrahydrofolate (THF) serving as the one-carbon carrier. This reaction serves as the major source of one-carbon groups required for the biosynthesis of purines, thymidylate, methionine, and other important biomolecules. Also exhibits THF-independent aldolase activity toward beta-hydroxyamino acids, producing glycine and aldehydes, via a retro-aldol mechanism. The polypeptide is Serine hydroxymethyltransferase (Polynucleobacter necessarius subsp. necessarius (strain STIR1)).